Consider the following 24-residue polypeptide: Defensin D6 (24 aa).

The protein belongs to the DEFL family. Group IV subfamily. As to expression, distributed in the epidermal cell layer of leaves and in the subepidermal layer region of stems. Not in roots.

Its subcellular location is the secreted. The protein localises to the cell wall. In terms of biological role, antimicrobial peptide. Active against Fusarium spp., Gram-positive and Gram-negative bacterial pathogens. In Spinacia oleracea (Spinach), this protein is Defensin D6.